The primary structure comprises 353 residues: Survival factor 2 (353 aa).

It belongs to the SVF1 family.

Its subcellular location is the cytoplasm. The protein resides in the nucleus. This is Survival factor 2 (svf2) from Schizosaccharomyces pombe (strain 972 / ATCC 24843) (Fission yeast).